Here is a 349-residue protein sequence, read N- to C-terminus: Protein RecA (349 aa).

69 to 76 (GPESSGKT) contributes to the ATP binding site.

It belongs to the RecA family.

It is found in the cytoplasm. Functionally, can catalyze the hydrolysis of ATP in the presence of single-stranded DNA, the ATP-dependent uptake of single-stranded DNA by duplex DNA, and the ATP-dependent hybridization of homologous single-stranded DNAs. It interacts with LexA causing its activation and leading to its autocatalytic cleavage. The chain is Protein RecA from Crocosphaera subtropica (strain ATCC 51142 / BH68) (Cyanothece sp. (strain ATCC 51142)).